The primary structure comprises 127 residues: uncharacterized protein (127 aa).

A run of 2 helical transmembrane segments spans residues 64-84 (GYYI…FGYL) and 101-118 (FFHF…AIYY).

It is found in the membrane. This is an uncharacterized protein from Saccharomyces cerevisiae (strain ATCC 204508 / S288c) (Baker's yeast).